The chain runs to 151 residues: Ribosomal RNA large subunit methyltransferase H (151 aa).

S-adenosyl-L-methionine-binding positions include glycine 100 and leucine 119 to phenylalanine 124.

It belongs to the RNA methyltransferase RlmH family. Homodimer.

It localises to the cytoplasm. It carries out the reaction pseudouridine(1915) in 23S rRNA + S-adenosyl-L-methionine = N(3)-methylpseudouridine(1915) in 23S rRNA + S-adenosyl-L-homocysteine + H(+). Its function is as follows. Specifically methylates the pseudouridine at position 1915 (m3Psi1915) in 23S rRNA. The protein is Ribosomal RNA large subunit methyltransferase H of Thermotoga sp. (strain RQ2).